A 99-amino-acid chain; its full sequence is uncharacterized protein (99 aa).

The stretch at 3–68 (ERLKAITNLL…EKFDSNRKFY (66 aa)) forms a coiled coil.

This is an uncharacterized protein from Aquifex aeolicus (strain VF5).